The sequence spans 275 residues: Intercellular adhesion molecule 2 (275 aa).

Residues 1 to 24 form the signal peptide; the sequence is MSSFSYRTLTVALFALICCPGSDE. The Extracellular portion of the chain corresponds to 25–223; the sequence is KVFEVHVRPK…EIYEPVSDSQ (199 aa). The region spanning 41–98 is the Ig-like C2-type 1 domain; sequence KGSLKVNCSTTCNQPEVGGLETSLDKILLDEQAQWKHYLVSNISHDTVLQCHFTCSGK. Residues Asn-47, Asn-82, Asn-105, Asn-153, Asn-176, and Asn-187 are each glycosylated (N-linked (GlcNAc...) asparagine). Disulfide bonds link Cys-48–Cys-91 and Cys-52–Cys-95. Residues 127–197 enclose the Ig-like C2-type 2 domain; it reads GKSFTIECRV…FSCLAVLDLM (71 aa). Cys-134 and Cys-190 are oxidised to a cystine. A helical transmembrane segment spans residues 224-248; that stretch reads MVIIVTVVSVLLSLFVTSVLLCFIF. Topologically, residues 249–275 are cytoplasmic; sequence GQHLRQQRMGTYGVRAAWRRLPQAFRP. The interval 251-275 is required for interaction with EZR, MSN and RDX and co-localization to microvilli; that stretch reads HLRQQRMGTYGVRAAWRRLPQAFRP.

The protein belongs to the immunoglobulin superfamily. ICAM family. As to quaternary structure, interacts with RDX, EZR and MSN.

It localises to the membrane. The protein resides in the cell projection. It is found in the microvillus. Its function is as follows. ICAM proteins are ligands for the leukocyte adhesion protein LFA-1 (integrin alpha-L/beta-2). ICAM2 may play a role in lymphocyte recirculation by blocking LFA-1-dependent cell adhesion. It mediates adhesive interactions important for antigen-specific immune response, NK-cell mediated clearance, lymphocyte recirculation, and other cellular interactions important for immune response and surveillance. The polypeptide is Intercellular adhesion molecule 2 (ICAM2) (Pan troglodytes (Chimpanzee)).